Reading from the N-terminus, the 222-residue chain is Ribulose-phosphate 3-epimerase (222 aa).

Ser7 serves as a coordination point for substrate. A divalent metal cation is bound by residues His32, Asp34, and His65. Asp34 serves as the catalytic Proton acceptor. Substrate is bound by residues His65, 141–144, 174–176, and 196–197; these read GFSG, DGG, and GS. Asp174 is an a divalent metal cation binding site. Asp174 acts as the Proton donor in catalysis.

It belongs to the ribulose-phosphate 3-epimerase family. The cofactor is a divalent metal cation.

It carries out the reaction D-ribulose 5-phosphate = D-xylulose 5-phosphate. It participates in carbohydrate degradation. Catalyzes the reversible epimerization of D-ribulose 5-phosphate to D-xylulose 5-phosphate. This is Ribulose-phosphate 3-epimerase from Aquifex aeolicus (strain VF5).